The following is a 714-amino-acid chain: Inducible lysine decarboxylase (714 aa).

N6-(pyridoxal phosphate)lysine is present on Lys367.

The protein belongs to the Orn/Lys/Arg decarboxylase class-I family. As to quaternary structure, homodecamer. Interacts with RavA. The cofactor is pyridoxal 5'-phosphate.

The protein resides in the cytoplasm. It catalyses the reaction L-lysine + H(+) = cadaverine + CO2. The protein is Inducible lysine decarboxylase (cadA) of Salmonella typhi.